We begin with the raw amino-acid sequence, 168 residues long: Small ribosomal subunit protein bS16 (168 aa).

The segment at 110–168 is disordered; that stretch reads LAEAEGGPSNEATQPKKKKAPAKKAASDIEATADPAGNADKSEPAAEGEDATVAGATEG.

It belongs to the bacterial ribosomal protein bS16 family.

In Mycobacterium sp. (strain JLS), this protein is Small ribosomal subunit protein bS16.